We begin with the raw amino-acid sequence, 166 residues long: Myosin regulatory light chain 2, ventricular/cardiac muscle isoform (166 aa).

Ser2 carries the n,N,N-trimethylserine modification. A phosphoserine mark is found at Ser14, Ser15, and Ser19. 3 EF-hand domains span residues 24–59, 94–129, and 130–165; these read TQIQ…LGRV, DPEE…QAER, and FSKE…GEEK. Residues Asp37, Asn39, Asp41, and Asp48 each coordinate Ca(2+). At Thr52 the chain carries Phosphothreonine.

As to quaternary structure, myosin is a hexamer of 2 heavy chains and 4 light chains. Interacts with MYOC. In terms of processing, N-terminus is methylated by METTL11A/NTM1. Post-translationally, phosphorylated by MYLK3 and MYLK2; promotes cardiac muscle contraction and function. Dephosphorylated by PPP1CB complexed to PPP1R12B. The phosphorylated form in adult is expressed as gradients across the heart from endocardium (low phosphorylation) to epicardium (high phosphorylation); regulates cardiac torsion and workload distribution. Abundantly expressed in both cardiac and slow skeletal muscle (soleus), with no detectable expression in fast skeletal muscle (vastus lateralis) or non-muscle tissue.

The protein localises to the cytoplasm. It is found in the myofibril. The protein resides in the sarcomere. Its subcellular location is the a band. Contractile protein that plays a role in heart development and function. Following phosphorylation, plays a role in cross-bridge cycling kinetics and cardiac muscle contraction by increasing myosin lever arm stiffness and promoting myosin head diffusion; as a consequence of the increase in maximum contraction force and calcium sensitivity of contraction force. These events altogether slow down myosin kinetics and prolong duty cycle resulting in accumulated myosins being cooperatively recruited to actin binding sites to sustain thin filament activation as a means to fine-tune myofilament calcium sensitivity to force. During cardiogenesis plays an early role in cardiac contractility by promoting cardiac myofibril assembly. The sequence is that of Myosin regulatory light chain 2, ventricular/cardiac muscle isoform from Rattus norvegicus (Rat).